A 622-amino-acid chain; its full sequence is Probable potassium transport system protein Kup (622 aa).

The next 12 helical transmembrane spans lie at 8–28 (LAALTLGAIGVVYGDIGTSVL), 50–70 (VLSILFWTLTTIVSLKYVVLV), 103–123 (LGIGVFGTSLFYGDGVITPAI), 137–157 (PHFGKAVIPLTLIVLFCLFAV), 169–189 (FGPVTLVWFTSIAALGVPHIV), 215–235 (FIILGAVVLCVTGAEALYADL), 247–267 (WFSVAMPALTINYFGQGALLL), 285–305 (ALIPLVIMATMATVIASQALI), 337–357 (IYIPFVNWALFLAIVLAVVMF), 366–386 (AYGIAVTLDMLITTVLTFFVI), 393–413 (PLALCIAATGFFFLVDLAFFG), and 419–439 (LLQGGWFPLMIGSIVFMLMMT).

This sequence belongs to the HAK/KUP transporter (TC 2.A.72) family.

It is found in the cell inner membrane. It catalyses the reaction K(+)(in) + H(+)(in) = K(+)(out) + H(+)(out). In terms of biological role, transport of potassium into the cell. Likely operates as a K(+):H(+) symporter. The protein is Probable potassium transport system protein Kup of Paracidovorax citrulli (strain AAC00-1) (Acidovorax citrulli).